A 340-amino-acid polypeptide reads, in one-letter code: Glycerol-3-phosphate dehydrogenase [NAD(P)+] (340 aa).

Serine 15, tyrosine 16, histidine 36, and lysine 110 together coordinate NADPH. The sn-glycerol 3-phosphate site is built by lysine 110, glycine 139, and threonine 141. An NADPH-binding site is contributed by alanine 143. The sn-glycerol 3-phosphate site is built by lysine 195, aspartate 248, serine 258, arginine 259, and asparagine 260. Residue lysine 195 is the Proton acceptor of the active site. Residue arginine 259 participates in NADPH binding. Residues valine 283 and glutamate 285 each coordinate NADPH.

Belongs to the NAD-dependent glycerol-3-phosphate dehydrogenase family.

The protein resides in the cytoplasm. The catalysed reaction is sn-glycerol 3-phosphate + NAD(+) = dihydroxyacetone phosphate + NADH + H(+). It catalyses the reaction sn-glycerol 3-phosphate + NADP(+) = dihydroxyacetone phosphate + NADPH + H(+). The protein operates within membrane lipid metabolism; glycerophospholipid metabolism. Its function is as follows. Catalyzes the reduction of the glycolytic intermediate dihydroxyacetone phosphate (DHAP) to sn-glycerol 3-phosphate (G3P), the key precursor for phospholipid synthesis. The polypeptide is Glycerol-3-phosphate dehydrogenase [NAD(P)+] (Baumannia cicadellinicola subsp. Homalodisca coagulata).